A 710-amino-acid chain; its full sequence is Prolyl endopeptidase (710 aa).

Position 1 is an N-acetylmethionine (Met-1). Lys-157 bears the N6-acetyllysine mark. Residues Ser-554, Asp-641, and His-680 each act as charge relay system in the active site.

It belongs to the peptidase S9A family. In terms of assembly, monomer. In terms of processing, the N-terminus is blocked.

It is found in the cytoplasm. It carries out the reaction Hydrolysis of Pro-|-Xaa &gt;&gt; Ala-|-Xaa in oligopeptides.. Functionally, cleaves peptide bonds on the C-terminal side of prolyl residues within peptides that are up to approximately 30 amino acids long. This chain is Prolyl endopeptidase (PREP), found in Homo sapiens (Human).